The chain runs to 157 residues: 2-C-methyl-D-erythritol 2,4-cyclodiphosphate synthase (157 aa).

A divalent metal cation contacts are provided by Asp8 and His10. 4-CDP-2-C-methyl-D-erythritol 2-phosphate-binding positions include 8–10 (DVH) and 34–35 (HS). His42 contacts a divalent metal cation. 4-CDP-2-C-methyl-D-erythritol 2-phosphate-binding positions include 56–58 (DIG), 132–135 (TTNE), and Arg142.

This sequence belongs to the IspF family. Homotrimer. The cofactor is a divalent metal cation.

It carries out the reaction 4-CDP-2-C-methyl-D-erythritol 2-phosphate = 2-C-methyl-D-erythritol 2,4-cyclic diphosphate + CMP. It participates in isoprenoid biosynthesis; isopentenyl diphosphate biosynthesis via DXP pathway; isopentenyl diphosphate from 1-deoxy-D-xylulose 5-phosphate: step 4/6. Involved in the biosynthesis of isopentenyl diphosphate (IPP) and dimethylallyl diphosphate (DMAPP), two major building blocks of isoprenoid compounds. Catalyzes the conversion of 4-diphosphocytidyl-2-C-methyl-D-erythritol 2-phosphate (CDP-ME2P) to 2-C-methyl-D-erythritol 2,4-cyclodiphosphate (ME-CPP) with a corresponding release of cytidine 5-monophosphate (CMP). This Chlorobium luteolum (strain DSM 273 / BCRC 81028 / 2530) (Pelodictyon luteolum) protein is 2-C-methyl-D-erythritol 2,4-cyclodiphosphate synthase.